The following is a 970-amino-acid chain: Probable histidine kinase 6 (970 aa).

The Cytoplasmic portion of the chain corresponds to 1-12; that stretch reads MGKPEARSGWRN. A helical transmembrane segment spans residues 13–33; sequence AAAAAWVLVAVACAAYMHWHL. The Extracellular portion of the chain corresponds to 34-306; sequence RRETMDRAEE…YRQKPPLPWS (273 aa). Residues 82–294 enclose the CHASE domain; it reads FPSAIDQDTF…GDPFRAHEMR (213 aa). Residues 307–327 traverse the membrane as a helical segment; sequence AITNPLGTFVIWMLVGYIICA. Residues 328 to 970 are Cytoplasmic-facing; that stretch reads AWSRYDKVSE…LVVGTKESAV (643 aa). One can recognise a Histidine kinase domain in the interval 362–651; sequence TVSHEIRTPM…TFTFSAVLKR (290 aa). His365 carries the phosphohistidine; by autocatalysis modification. 2 consecutive Response regulatory domains span residues 676-802 and 827-962; these read KAIL…QQLL and NILI…SRLV. Asp877 is modified (4-aspartylphosphate).

Activation probably requires a transfer of a phosphate group between a His in the transmitter domain and an Asp of the receiver domain. In terms of tissue distribution, highly expressed in spikelets and at lower levels in roots, young leaves, mature leaves and stems.

The protein resides in the cell membrane. It catalyses the reaction ATP + protein L-histidine = ADP + protein N-phospho-L-histidine.. Cytokinin receptor related to bacterial two-component regulators. Functions as a histidine kinase and transmits the stress signal to a downstream MAPK cascade. This is Probable histidine kinase 6 from Oryza sativa subsp. japonica (Rice).